The primary structure comprises 205 residues: Proteasome subunit beta (205 aa).

Positions 1–8 (MDDKQYKG) are cleaved as a propeptide — removed in mature form; by autocatalysis. The active-site Nucleophile is the threonine 9.

It belongs to the peptidase T1B family. The 20S proteasome core is composed of 14 alpha and 14 beta subunits that assemble into four stacked heptameric rings, resulting in a barrel-shaped structure. The two inner rings, each composed of seven catalytic beta subunits, are sandwiched by two outer rings, each composed of seven alpha subunits. The catalytic chamber with the active sites is on the inside of the barrel. Has a gated structure, the ends of the cylinder being occluded by the N-termini of the alpha-subunits. Is capped at one or both ends by the proteasome regulatory ATPase, PAN.

The protein resides in the cytoplasm. It catalyses the reaction Cleavage of peptide bonds with very broad specificity.. The formation of the proteasomal ATPase PAN-20S proteasome complex, via the docking of the C-termini of PAN into the intersubunit pockets in the alpha-rings, triggers opening of the gate for substrate entry. Interconversion between the open-gate and close-gate conformations leads to a dynamic regulation of the 20S proteasome proteolysis activity. Functionally, component of the proteasome core, a large protease complex with broad specificity involved in protein degradation. The polypeptide is Proteasome subunit beta (Methanocella paludicola (strain DSM 17711 / JCM 13418 / NBRC 101707 / SANAE)).